Here is a 145-residue protein sequence, read N- to C-terminus: D-aminoacyl-tRNA deacylase (145 aa).

Positions 137–138 (GP) match the Gly-cisPro motif, important for rejection of L-amino acids motif.

The protein belongs to the DTD family. In terms of assembly, homodimer.

It localises to the cytoplasm. It catalyses the reaction glycyl-tRNA(Ala) + H2O = tRNA(Ala) + glycine + H(+). It carries out the reaction a D-aminoacyl-tRNA + H2O = a tRNA + a D-alpha-amino acid + H(+). An aminoacyl-tRNA editing enzyme that deacylates mischarged D-aminoacyl-tRNAs. Also deacylates mischarged glycyl-tRNA(Ala), protecting cells against glycine mischarging by AlaRS. Acts via tRNA-based rather than protein-based catalysis; rejects L-amino acids rather than detecting D-amino acids in the active site. By recycling D-aminoacyl-tRNA to D-amino acids and free tRNA molecules, this enzyme counteracts the toxicity associated with the formation of D-aminoacyl-tRNA entities in vivo and helps enforce protein L-homochirality. This is D-aminoacyl-tRNA deacylase from Pseudomonas paraeruginosa (strain DSM 24068 / PA7) (Pseudomonas aeruginosa (strain PA7)).